Consider the following 596-residue polypeptide: UvrABC system protein C (596 aa).

Residues 14-91 form the GIY-YIG domain; sequence QQPGCYLMKD…IKKYDPRYNV (78 aa). A UVR domain is found at 196 to 231; it reads KDIRKNLAGEMQKASEALNFERAKEIRDTIQHIDAT.

Belongs to the UvrC family. Interacts with UvrB in an incision complex.

It is found in the cytoplasm. In terms of biological role, the UvrABC repair system catalyzes the recognition and processing of DNA lesions. UvrC both incises the 5' and 3' sides of the lesion. The N-terminal half is responsible for the 3' incision and the C-terminal half is responsible for the 5' incision. The polypeptide is UvrABC system protein C (Oceanobacillus iheyensis (strain DSM 14371 / CIP 107618 / JCM 11309 / KCTC 3954 / HTE831)).